Consider the following 247-residue polypeptide: E3 ubiquitin-protein ligase RNF182 (247 aa).

An RING-type zinc finger spans residues 20–68 (CKICYNRYNLKQRKPKVLECCHRVCAKCLYKIIDFGDSPQGVIVCPFCR). 2 helical membrane passes run 184–204 (VLVWLLGLLYFSSLPLGIYLL) and 211–231 (LGVVFVSLVPSSLVILMVYGF).

As to quaternary structure, interacts with ATP6V0C. In terms of tissue distribution, up-regulated in neuronal cells subjected to cell death-inducing injuries, such as oxygen and glucose deprivation (at protein level). Could be up-regulated in Alzheimer disease brains. Highly expressed in innate immune organs such as lymph nodes and spleen and in immune cells such as macrophages and dendritic cells.

It localises to the membrane. The protein resides in the cytoplasm. It carries out the reaction S-ubiquitinyl-[E2 ubiquitin-conjugating enzyme]-L-cysteine + [acceptor protein]-L-lysine = [E2 ubiquitin-conjugating enzyme]-L-cysteine + N(6)-ubiquitinyl-[acceptor protein]-L-lysine.. It functions in the pathway protein modification; protein ubiquitination. In terms of biological role, E3 ubiquitin-protein ligase that mediates the ubiquitination of ATP6V0C and targets it to degradation via the ubiquitin-proteasome pathway. Also plays a role in the inhibition of TLR-triggered innate immune response by mediating 'Lys'-48-linked ubiquitination and subsequent degradation of NF-kappa-B component RELA. The sequence is that of E3 ubiquitin-protein ligase RNF182 (RNF182) from Homo sapiens (Human).